We begin with the raw amino-acid sequence, 99 residues long: uncharacterized protein (99 aa).

In terms of domain architecture, TM2 spans 32–79; sequence KKSVGIAVLLSFIIPGAGQMYLGRVGKGIILLLTCWLIIPWIYSIYDA. Helical transmembrane passes span 34–54 and 56–76; these read SVGI…MYLG and VGKG…IYSI.

The protein resides in the cell membrane. This is an uncharacterized protein from Methanocaldococcus jannaschii (strain ATCC 43067 / DSM 2661 / JAL-1 / JCM 10045 / NBRC 100440) (Methanococcus jannaschii).